A 317-amino-acid chain; its full sequence is Melanocyte-stimulating hormone receptor (317 aa).

At Met-1–Glu-37 the chain is on the extracellular side. N-linked (GlcNAc...) asparagine glycans are attached at residues Asn-15 and Asn-29. Residues Val-38–Ile-63 form a helical membrane-spanning segment. Residues Ala-64–Pro-72 are Cytoplasmic-facing. The helical transmembrane segment at Met-73 to Leu-93 threads the bilayer. Over Glu-94–Asp-118 the chain is Extracellular. The chain crosses the membrane as a helical span at residues Ile-119–Val-140. The Cytoplasmic segment spans residues Asp-141–Arg-163. The chain crosses the membrane as a helical span at residues Ala-164–Tyr-183. Residues Asn-184–Cys-191 are Extracellular-facing. The chain crosses the membrane as a helical span at residues Leu-192–Leu-211. Over Ala-212–Ala-240 the chain is Cytoplasmic. The helical transmembrane segment at Ala-241–Leu-266 threads the bilayer. Residues Cys-267–Asn-279 lie on the Extracellular side of the membrane. Residues Phe-280–Phe-300 form a helical membrane-spanning segment. Residues Arg-301 to Trp-317 lie on the Cytoplasmic side of the membrane. Cys-315 carries S-palmitoyl cysteine lipidation.

Belongs to the G-protein coupled receptor 1 family. In terms of assembly, interacts with MGRN1, but does not undergo MGRN1-mediated ubiquitination; this interaction competes with GNAS-binding and thus inhibits agonist-induced cAMP production. Interacts with OPN3; the interaction results in a decrease in MC1R-mediated cAMP signaling and ultimately a decrease in melanin production in melanocytes.

It localises to the cell membrane. In terms of biological role, receptor for MSH (alpha, beta and gamma) and ACTH. The activity of this receptor is mediated by G proteins which activate adenylate cyclase. Mediates melanogenesis, the production of eumelanin (black/brown) and phaeomelanin (red/yellow), via regulation of cAMP signaling in melanocytes. The chain is Melanocyte-stimulating hormone receptor (MC1R) from Canis lupus familiaris (Dog).